The following is a 237-amino-acid chain: NAD-dependent protein deacetylase (237 aa).

The 237-residue stretch at M1–E237 folds into the Deacetylase sirtuin-type domain. Residues A25, T29, R37, Q100, I102, D103, and H118 each coordinate NAD(+). Nicotinamide-binding residues include I102 and D103. H118 acts as the Proton acceptor in catalysis. Zn(2+) is bound by residues C126, C129, H144, and C147. T185, S186, and N209 together coordinate NAD(+).

Belongs to the sirtuin family. Class U subfamily.

It is found in the cytoplasm. The enzyme catalyses N(6)-acetyl-L-lysyl-[protein] + NAD(+) + H2O = 2''-O-acetyl-ADP-D-ribose + nicotinamide + L-lysyl-[protein]. In terms of biological role, NAD-dependent protein deacetylase which modulates the activities of several enzymes which are inactive in their acetylated form. The protein is NAD-dependent protein deacetylase of Enterococcus faecalis (strain ATCC 700802 / V583).